The sequence spans 99 residues: Plastocyanin (99 aa).

Residues 1 to 99 (VEVLMGGSGG…IGMSGIVTVN (99 aa)) enclose the Plastocyanin-like domain. Residues histidine 37, cysteine 84, histidine 87, and methionine 92 each coordinate Cu cation.

Belongs to the plastocyanin family. Requires Cu(2+) as cofactor.

It localises to the plastid. Its subcellular location is the chloroplast thylakoid membrane. Functionally, participates in electron transfer between P700 and the cytochrome b6-f complex in photosystem I. The chain is Plastocyanin (PETE) from Ginkgo biloba (Ginkgo).